Here is a 249-residue protein sequence, read N- to C-terminus: DNA repair protein RecO (249 aa).

This sequence belongs to the RecO family.

In terms of biological role, involved in DNA repair and RecF pathway recombination. The chain is DNA repair protein RecO from Rhodopseudomonas palustris (strain HaA2).